The primary structure comprises 698 residues: DNA ligase (698 aa).

NAD(+) is bound by residues 47-51 (DAQYD), 96-97 (SL), and glutamate 128. Lysine 130 functions as the N6-AMP-lysine intermediate in the catalytic mechanism. 4 residues coordinate NAD(+): arginine 151, glutamate 186, lysine 303, and lysine 327. Positions 422, 425, 440, and 446 each coordinate Zn(2+). Positions 620 to 698 (GDNLLLSNQT…EEEWIKMVNE (79 aa)) constitute a BRCT domain.

It belongs to the NAD-dependent DNA ligase family. LigA subfamily. Requires Mg(2+) as cofactor. The cofactor is Mn(2+).

It catalyses the reaction NAD(+) + (deoxyribonucleotide)n-3'-hydroxyl + 5'-phospho-(deoxyribonucleotide)m = (deoxyribonucleotide)n+m + AMP + beta-nicotinamide D-nucleotide.. DNA ligase that catalyzes the formation of phosphodiester linkages between 5'-phosphoryl and 3'-hydroxyl groups in double-stranded DNA using NAD as a coenzyme and as the energy source for the reaction. It is essential for DNA replication and repair of damaged DNA. This chain is DNA ligase, found in Orientia tsutsugamushi (strain Boryong) (Rickettsia tsutsugamushi).